We begin with the raw amino-acid sequence, 198 residues long: Large ribosomal subunit protein uL13B (198 aa).

An N-acetylserine; partial modification is found at Ser2. Phosphoserine is present on Ser43. Residue Lys176 forms a Glycyl lysine isopeptide (Lys-Gly) (interchain with G-Cter in ubiquitin) linkage. Phosphoserine is present on residues Ser181, Ser185, and Ser187.

The protein belongs to the universal ribosomal protein uL13 family. In terms of assembly, component of the large ribosomal subunit (LSU). Mature yeast ribosomes consist of a small (40S) and a large (60S) subunit. The 40S small subunit contains 1 molecule of ribosomal RNA (18S rRNA) and 33 different proteins (encoded by 57 genes). The large 60S subunit contains 3 rRNA molecules (25S, 5.8S and 5S rRNA) and 46 different proteins (encoded by 81 genes). N-terminally acetylated by acetyltransferase NatA.

The protein localises to the cytoplasm. In terms of biological role, component of the ribosome, a large ribonucleoprotein complex responsible for the synthesis of proteins in the cell. The small ribosomal subunit (SSU) binds messenger RNAs (mRNAs) and translates the encoded message by selecting cognate aminoacyl-transfer RNA (tRNA) molecules. The large subunit (LSU) contains the ribosomal catalytic site termed the peptidyl transferase center (PTC), which catalyzes the formation of peptide bonds, thereby polymerizing the amino acids delivered by tRNAs into a polypeptide chain. The nascent polypeptides leave the ribosome through a tunnel in the LSU and interact with protein factors that function in enzymatic processing, targeting, and the membrane insertion of nascent chains at the exit of the ribosomal tunnel. In Saccharomyces cerevisiae (strain ATCC 204508 / S288c) (Baker's yeast), this protein is Large ribosomal subunit protein uL13B.